Consider the following 195-residue polypeptide: Large ribosomal subunit protein bL17 (195 aa).

The disordered stretch occupies residues 132–195 (ARGTRFAARK…TEAKDTKPES (64 aa)). Low complexity predominate over residues 159 to 186 (PTAAAVAAEAQAEQPTAEAVAADDAATT).

Belongs to the bacterial ribosomal protein bL17 family. Part of the 50S ribosomal subunit. Contacts protein L32.

This chain is Large ribosomal subunit protein bL17, found in Parafrankia sp. (strain EAN1pec).